A 341-amino-acid chain; its full sequence is Ribosomal RNA small subunit methyltransferase H (341 aa).

Residues 47-49, Asp64, Phe91, Asp109, and Gln116 contribute to the S-adenosyl-L-methionine site; that span reads GGY.

The protein belongs to the methyltransferase superfamily. RsmH family.

Its subcellular location is the cytoplasm. It carries out the reaction cytidine(1402) in 16S rRNA + S-adenosyl-L-methionine = N(4)-methylcytidine(1402) in 16S rRNA + S-adenosyl-L-homocysteine + H(+). Functionally, specifically methylates the N4 position of cytidine in position 1402 (C1402) of 16S rRNA. The sequence is that of Ribosomal RNA small subunit methyltransferase H from Sinorhizobium medicae (strain WSM419) (Ensifer medicae).